The chain runs to 147 residues: Hemoglobin subunit gamma-1 (147 aa).

G2 is modified (N-acetylglycine; in form Hb F1). Positions H3–H147 constitute a Globin domain. The residue at position 13 (T13) is a Phosphothreonine. Phosphoserine is present on residues S45, S51, and S53. K60 is modified (N6-acetyllysine). H64 contributes to the heme b binding site. K83 is modified (N6-acetyllysine). Position 93 (H93) interacts with heme b. S-nitrosocysteine is present on C94. A Phosphoserine modification is found at S140.

Belongs to the globin family. As to quaternary structure, heterotetramer of two alpha chains and two gamma chains in fetal hemoglobin (Hb F). In the case of deletions affecting one or more of the alpha chains, the excess gamma chains form homotetramers that exhibit neither Bohr effect nor heme-heme cooperativity (hemoglobin Bart's). In terms of processing, acetylation of Gly-2 converts Hb F to the minor Hb F1. In terms of tissue distribution, red blood cells.

In terms of biological role, gamma chains make up the fetal hemoglobin F, in combination with alpha chains. In Homo sapiens (Human), this protein is Hemoglobin subunit gamma-1 (HBG1).